Reading from the N-terminus, the 257-residue chain is Imidazole glycerol phosphate synthase subunit HisF (257 aa).

Active-site residues include aspartate 12 and aspartate 131.

Belongs to the HisA/HisF family. Heterodimer of HisH and HisF.

The protein localises to the cytoplasm. It carries out the reaction 5-[(5-phospho-1-deoxy-D-ribulos-1-ylimino)methylamino]-1-(5-phospho-beta-D-ribosyl)imidazole-4-carboxamide + L-glutamine = D-erythro-1-(imidazol-4-yl)glycerol 3-phosphate + 5-amino-1-(5-phospho-beta-D-ribosyl)imidazole-4-carboxamide + L-glutamate + H(+). The protein operates within amino-acid biosynthesis; L-histidine biosynthesis; L-histidine from 5-phospho-alpha-D-ribose 1-diphosphate: step 5/9. Its function is as follows. IGPS catalyzes the conversion of PRFAR and glutamine to IGP, AICAR and glutamate. The HisF subunit catalyzes the cyclization activity that produces IGP and AICAR from PRFAR using the ammonia provided by the HisH subunit. This is Imidazole glycerol phosphate synthase subunit HisF from Burkholderia mallei (strain NCTC 10247).